We begin with the raw amino-acid sequence, 448 residues long: Exodeoxyribonuclease 7 large subunit (448 aa).

Belongs to the XseA family. Heterooligomer composed of large and small subunits.

It localises to the cytoplasm. It catalyses the reaction Exonucleolytic cleavage in either 5'- to 3'- or 3'- to 5'-direction to yield nucleoside 5'-phosphates.. Functionally, bidirectionally degrades single-stranded DNA into large acid-insoluble oligonucleotides, which are then degraded further into small acid-soluble oligonucleotides. The polypeptide is Exodeoxyribonuclease 7 large subunit (Shewanella baltica (strain OS155 / ATCC BAA-1091)).